Reading from the N-terminus, the 375-residue chain is Nucleosome assembly protein 1-like 4 (375 aa).

The tract at residues 1–31 (MADHSFSDGVPSDSVEAAKNASNTEKLTDQV) is disordered. The residue at position 2 (Ala2) is an N-acetylalanine. Residues Ser5, Ser7, and Ser12 each carry the phosphoserine modification. Residues 20–31 (NASNTEKLTDQV) show a composition bias toward polar residues. Thr51 bears the Phosphothreonine mark. Residues Ser53 and Ser54 each carry the phosphoserine modification. Thr58 bears the Phosphothreonine mark. The residue at position 105 (Lys105) is an N6-acetyllysine. A disordered region spans residues 116 to 137 (PTDAESEWHSENEEEEKLAGDM). The span at 121–137 (SEWHSENEEEEKLAGDM) shows a compositional bias: basic and acidic residues. A Phosphoserine modification is found at Ser125. At Lys146 the chain carries N6-acetyllysine. Residues 265-271 (IKKKQKH) carry the Nuclear localization signal motif. Phosphoserine is present on Ser304. The tract at residues 339-375 (AIEDDDNFEEGEEGEEEELEGDEEGEDEDDAEINPKV) is disordered.

This sequence belongs to the nucleosome assembly protein (NAP) family. In terms of assembly, interacts with core (H2A, CD2APH2B, H3, H4) and linker (H1) histones. (Microbial infection) Interacts with Chikungunya virus non-structural protein 3 (via C-terminus). Phosphorylated at the G0/G1 boundary but it is not phosphorylated in S-phase. Phosphorylated protein remains in the cytoplasm in a complex with histones during the G0/G1 transition, whereas dephosphorylation triggers its transport into the nucleus at the G1/S-boundary. Post-translationally, polyglutamylated by TTLL4, a modification that occurs exclusively on glutamate residues and results in polyglutamate chains on the gamma-carboxyl group. Some residues may also be monoglycylated but not polyglycylated due to the absence of functional TTLL10 in human. As to expression, ubiquitous. Biallelically expressed in fetal and adult tissues. Highest levels in testis.

The protein localises to the nucleus. The protein resides in the cytoplasm. Acts as a histone chaperone in nucleosome assembly. This Homo sapiens (Human) protein is Nucleosome assembly protein 1-like 4.